A 492-amino-acid polypeptide reads, in one-letter code: MTTQHSKTDVILIGGGIMSATLGTLLKELSPEKNIKVFEKLAQPGEESSNVWNNAGTGHSALCELNYTKEGKDGTVDCSKAIKINEQYQISKQFWAYLVKTGQLDNPDRFIQAVPHMSFVIGEDNVAFIKSRVATLKKSVLFEKMKLSQDEEEMKSWVPLMIEGRKSDEPIALTYDETGTDVNFGALTAKLFENLEQRGVGIQYKQNVLDIKKQKSGAWLVKVKDLETNETTTYESDFVFIGAGGASLPLLQKTGIKQSKHIGGFPVSGLFLRCTNQEVIDRHHAKVYGKAAVGAPPMSVPHLDTRFVDGKRSLLFGPFAGFSPKFLKTGSHMDLIKSVKPNNIVTMLSAGIKEMSLTKYLVSQLMLSNDERMDDLRVFFPNAKNEDWEVITAGQRVQVIKDTEDSKGNLQFGTEVITSDDGTLAALLGASPGASTAVDIMFDVLQRCYRDEFKGWEPKIKEMVPSFGYRLTDHEDLYHKINEEVTKYLQVK.

The protein belongs to the MQO family. The cofactor is FAD.

It catalyses the reaction (S)-malate + a quinone = a quinol + oxaloacetate. It participates in carbohydrate metabolism; tricarboxylic acid cycle; oxaloacetate from (S)-malate (quinone route): step 1/1. The protein is Probable malate:quinone oxidoreductase 1 of Staphylococcus aureus (strain MW2).